Consider the following 221-residue polypeptide: 2,3-bisphosphoglycerate-dependent phosphoglycerate mutase (221 aa).

Substrate-binding positions include 8–15, 21–22, Arg60, 87–90, Lys98, 114–115, and 174–175; these read RHGNSLWN, TG, ERHY, RR, and GN. Catalysis depends on His9, which acts as the Tele-phosphohistidine intermediate. Glu87 acts as the Proton donor/acceptor in catalysis. Residues 114-140 form a disordered region; the sequence is RRGYDTPPPPLHSQADDPRYEEPPPLS.

Belongs to the phosphoglycerate mutase family. BPG-dependent PGAM subfamily.

It catalyses the reaction (2R)-2-phosphoglycerate = (2R)-3-phosphoglycerate. It functions in the pathway carbohydrate degradation; glycolysis; pyruvate from D-glyceraldehyde 3-phosphate: step 3/5. In terms of biological role, catalyzes the interconversion of 2-phosphoglycerate and 3-phosphoglycerate. This is 2,3-bisphosphoglycerate-dependent phosphoglycerate mutase from Tropheryma whipplei (strain TW08/27) (Whipple's bacillus).